Consider the following 1175-residue polypeptide: Pyruvate carboxylase 1 (1175 aa).

The Biotin carboxylation domain occupies 31–481 (EFNKVMVANR…DTYFIDEHPE (451 aa)). 3 residues coordinate ATP: Lys-147, Glu-231, and His-266. Positions 151 to 348 (RQAAIEAGVQ…LVQAQIRIAE (198 aa)) constitute an ATP-grasp domain. Arg-323 is an active-site residue. One can recognise a Pyruvate carboxyltransferase domain in the interval 559–828 (CMITDTTFRD…DTGLSLDDIS (270 aa)). Substrate-binding positions include 567–571 (RDAHQ) and Arg-640. Residue Asp-568 coordinates a divalent metal cation. Lys-737, His-767, and His-769 together coordinate a divalent metal cation. N6-carboxylysine is present on Lys-737. Thr-904 serves as a coordination point for substrate. A Biotinyl-binding domain is found at 1099 to 1174 (RALPGVRGHI…SAGDLVVEVE (76 aa)). Position 1140 is an N6-biotinyllysine (Lys-1140).

Interacts with sir-2.2 and sir-2.3. Biotin is required as a cofactor. It depends on Zn(2+) as a cofactor.

It localises to the cytoplasm. It carries out the reaction hydrogencarbonate + pyruvate + ATP = oxaloacetate + ADP + phosphate + H(+). Its pathway is carbohydrate biosynthesis; gluconeogenesis. Pyruvate carboxylase catalyzes a 2-step reaction, involving the ATP-dependent carboxylation of the covalently attached biotin in the first step and the transfer of the carboxyl group to pyruvate in the second. The sequence is that of Pyruvate carboxylase 1 from Caenorhabditis elegans.